Reading from the N-terminus, the 138-residue chain is Homeobox protein HD-11 (138 aa).

A DNA-binding region (homeobox) is located at residues Cys-30–Gly-89.

The protein localises to the nucleus. The sequence is that of Homeobox protein HD-11 (HD-11) from Encephalitozoon cuniculi (strain GB-M1) (Microsporidian parasite).